Here is an 86-residue protein sequence, read N- to C-terminus: Small ribosomal subunit protein bS18 (86 aa).

The protein belongs to the bacterial ribosomal protein bS18 family. As to quaternary structure, part of the 30S ribosomal subunit. Forms a tight heterodimer with protein bS6.

In terms of biological role, binds as a heterodimer with protein bS6 to the central domain of the 16S rRNA, where it helps stabilize the platform of the 30S subunit. The sequence is that of Small ribosomal subunit protein bS18 from Protochlamydia amoebophila (strain UWE25).